The chain runs to 97 residues: Large ribosomal subunit protein bL31 (97 aa).

Residues 76-97 are disordered; the sequence is KTPKKAKGKTEEYTKHRSLNEL. Residues 83 to 97 are compositionally biased toward basic and acidic residues; the sequence is GKTEEYTKHRSLNEL.

The protein belongs to the bacterial ribosomal protein bL31 family. Type A subfamily. In terms of assembly, part of the 50S ribosomal subunit.

In terms of biological role, binds the 23S rRNA. The chain is Large ribosomal subunit protein bL31 from Mycoplasma pneumoniae (strain ATCC 29342 / M129 / Subtype 1) (Mycoplasmoides pneumoniae).